Consider the following 76-residue polypeptide: Small ribosomal subunit protein bS18 (76 aa).

The protein belongs to the bacterial ribosomal protein bS18 family. In terms of assembly, part of the 30S ribosomal subunit. Forms a tight heterodimer with protein bS6.

Functionally, binds as a heterodimer with protein bS6 to the central domain of the 16S rRNA, where it helps stabilize the platform of the 30S subunit. This Pseudomonas fluorescens (strain ATCC BAA-477 / NRRL B-23932 / Pf-5) protein is Small ribosomal subunit protein bS18.